Consider the following 324-residue polypeptide: Esterase FPSE_08126 (324 aa).

Active-site residues include serine 156, aspartate 255, and histidine 285.

Belongs to the AB hydrolase 3 family.

Esterase; part of the Fusarium detoxification of benzoxazolinone cluster involved in the degradation of benzoxazolinones produced by the host plant. Maize, wheat, and rye produce the 2 benzoxazinone phytoanticipins 2,4-dihy-droxy-7-methoxy-1,4-benzoxazin-3-one (DIMBOA) and 2,4-dihydroxy-1,4-benzoxazin-3-one (DIBOA) that, due to their inherent instability once released, spontaneously degrade to the more stable corresponding benzoxazolinones, 6-methoxy-2-benzoxazolinone (MBOA) and 2-benzoxazolinone (BOA), respectively. The first step in the detoxification of benzoxazolinones involves the hydrolysis of the cyclic ester bond of benzoxazolinones by the gamma-lactamase FDB1 to aminophenols. FDB1 is able to convert 2-benzoxazolinone (BOA) into 2-aminophenol (2-AP), as well as 6-methoxy-2-benzoxazolinone (MBOA) into 5-methoxy-2-aminophenol (2-AMP). The N-malonyltransferase FDB2 then metabolizes aminophenols via N-malonylation to non-toxic malonamic acids. FDB2 converts 2-AP into N-(2-hydroxyphenyl) malonamic acid (HPMA) and 2-AMP into N-(2-hydroxy-4-methoxyphenyl) malonamic acid (HMPMA). The cluster also contains 2 transcription factors (FDB3 and FPSE_08121), an aldo-keto reductase (FPSE_08125) that possibly associates with a ketone component of BOA and MBOA degradation, an esterase (FPSE_08126), an acyl-CoA transferase (FPSE_08120), a solute carrier protein (FPSE_08119) and a transmembrane transporter (FPSE_08127) proposed to shuttle metabolites of benzoxazolinone degradation. This chain is Esterase FPSE_08126, found in Fusarium pseudograminearum (strain CS3096) (Wheat and barley crown-rot fungus).